A 575-amino-acid polypeptide reads, in one-letter code: Carboxylesterase 5A (575 aa).

The signal sequence occupies residues 1-20; sequence MSGNWVHPGQILIWAIWVLA. A disulfide bridge links cysteine 94 with cysteine 121. The Acyl-ester intermediate role is filled by serine 226. N-linked (GlcNAc...) asparagine glycosylation occurs at asparagine 281. Glutamate 345 acts as the Charge relay system in catalysis. N-linked (GlcNAc...) asparagine glycosylation occurs at asparagine 363. Catalysis depends on histidine 454, which acts as the Charge relay system. Residues asparagine 513 and asparagine 524 are each glycosylated (N-linked (GlcNAc...) asparagine).

It belongs to the type-B carboxylesterase/lipase family. Post-translationally, N-glycosylated.

It is found in the secreted. The catalysed reaction is a carboxylic ester + H2O = an alcohol + a carboxylate + H(+). Its function is as follows. Involved in the detoxification of xenobiotics and in the activation of ester and amide prodrugs. The polypeptide is Carboxylesterase 5A (CES5A) (Homo sapiens (Human)).